The primary structure comprises 274 residues: Probable lipoprotein peptidase YaeF (274 aa).

Residues 1 to 20 form the signal peptide; the sequence is MDKPKAYCRLFLPSFLLLSA. Cysteine 21 carries N-palmitoyl cysteine lipidation. Cysteine 21 is lipidated: S-diacylglycerol cysteine. The active-site Nucleophile is the cysteine 207. The active-site Proton acceptor is the histidine 257.

The protein resides in the cell inner membrane. This chain is Probable lipoprotein peptidase YaeF (yaeF), found in Escherichia coli (strain K12).